A 231-amino-acid polypeptide reads, in one-letter code: Large ribosomal subunit protein uL1 (231 aa).

The protein belongs to the universal ribosomal protein uL1 family. As to quaternary structure, part of the 50S ribosomal subunit.

Its function is as follows. Binds directly to 23S rRNA. The L1 stalk is quite mobile in the ribosome, and is involved in E site tRNA release. Functionally, protein L1 is also a translational repressor protein, it controls the translation of the L11 operon by binding to its mRNA. The polypeptide is Large ribosomal subunit protein uL1 (Methylocella silvestris (strain DSM 15510 / CIP 108128 / LMG 27833 / NCIMB 13906 / BL2)).